Consider the following 277-residue polypeptide: NH(3)-dependent NAD(+) synthetase (277 aa).

36–43 (GLSGGIDS) contributes to the ATP binding site. Aspartate 42 lines the Mg(2+) pocket. Arginine 118 provides a ligand contact to deamido-NAD(+). Threonine 138 is an ATP binding site. Glutamate 143 provides a ligand contact to Mg(2+). 2 residues coordinate ATP: lysine 167 and serine 189.

Belongs to the NAD synthetase family. In terms of assembly, homodimer.

The catalysed reaction is deamido-NAD(+) + NH4(+) + ATP = AMP + diphosphate + NAD(+) + H(+). It functions in the pathway cofactor biosynthesis; NAD(+) biosynthesis; NAD(+) from deamido-NAD(+) (ammonia route): step 1/1. Its function is as follows. Catalyzes the ATP-dependent amidation of deamido-NAD to form NAD. Uses ammonia as a nitrogen source. In Chlorobium phaeobacteroides (strain BS1), this protein is NH(3)-dependent NAD(+) synthetase.